A 196-amino-acid polypeptide reads, in one-letter code: Chaperone protein TorD (196 aa).

Belongs to the TorD/DmsD family. TorD subfamily.

It is found in the cytoplasm. Its function is as follows. Involved in the biogenesis of TorA. Acts on TorA before the insertion of the molybdenum cofactor and, as a result, probably favors a conformation of the apoenzyme that is competent for acquiring the cofactor. The sequence is that of Chaperone protein TorD from Pasteurella multocida (strain Pm70).